The sequence spans 334 residues: Protein U17/U16 (334 aa).

It belongs to the herpesviridae US22 family.

In terms of biological role, isoform 3 can transactivate the human immunodeficiency virus type 1 promoter. In Human herpesvirus 6A (strain Uganda-1102) (HHV-6 variant A), this protein is Protein U17/U16 (U17/U16).